Reading from the N-terminus, the 798-residue chain is Probable G-protein coupled receptor 156 (798 aa).

Residues 1–49 lie on the Extracellular side of the membrane; that stretch reads MEPEINCSEFCDSFPGQELDRRPLHDLCKTTITESQHSSTAASPLSPAL. N6 is a glycosylation site (N-linked (GlcNAc...) asparagine). Residues 50–70 traverse the membrane as a helical segment; it reads LGIMWTFLSCGLLLVLFFLAF. The Cytoplasmic portion of the chain corresponds to 71 to 86; sequence TIRCRKNRIVKMSSPN. Residues 87–107 form a helical membrane-spanning segment; that stretch reads LNVVTLLGSCLTYISAYLFGI. At 108 to 118 the chain is on the extracellular side; sequence QDALEGSSVEA. Residues 119–139 traverse the membrane as a helical segment; sequence LIQTRLSLLCIGTSLVFGPIL. Residues 140–164 lie on the Cytoplasmic side of the membrane; sequence GKSWRLYKVFTQRVPDKRVIIKDLQ. The helical transmembrane segment at 165 to 185 threads the bilayer; that stretch reads LLGLVAALVVADVILLVTWVL. The Extracellular portion of the chain corresponds to 186–222; that stretch reads TDPIQCLQMLGVSMKVTGRDVSCSLTNTHFCASRYSD. The chain crosses the membrane as a helical span at residues 223 to 243; that stretch reads VWIALVLGCKGLLLLYGAYLA. Over 244–257 the chain is Cytoplasmic; sequence GLTNHVSSPPVNQS. A helical membrane pass occupies residues 258–278; sequence LTIMVGVNLLLLTAGLLFVVT. Residues 279–288 are Extracellular-facing; that stretch reads RYLHSWPNLV. Residues 289-309 form a helical membrane-spanning segment; sequence FGLTSGGIFVCTTTVNCCVFI. The Cytoplasmic segment spans residues 310 to 798; that stretch reads PQLKQWKAFE…FKDDLKPTLV (489 aa). Residues 353 to 390 are a coiled coil; it reads DEKSCMERLLTEKNAVIESLQEQVSNAKEKLVKLMSAE. 3 disordered regions span residues 441 to 497, 546 to 666, and 693 to 715; these read HVQG…PMAP, SEAP…KQCE, and PAAP…PRLS. Basic and acidic residues predominate over residues 479 to 492; that stretch reads PKAEQSEGPERGDQ. A compositionally biased stretch (polar residues) spans 559 to 572; sequence LWKSTTSRSPQKLS. The segment covering 583-594 has biased composition (basic residues); that stretch reads VRRRRAAQRARS. Positions 606–624 are enriched in polar residues; sequence HQANSTVSSSQSGLIVQNR. Residues 639-648 show a composition bias toward low complexity; that stretch reads PRSSSVKPSP.

The protein belongs to the G-protein coupled receptor 3 family. GABA-B receptor subfamily. Expressed in the outer and inner hair cells of the organ of Corti (at protein level). Expressed in the utricle and saccule within the vestibule (at protein level).

The protein resides in the cell membrane. The protein localises to the postsynaptic cell membrane. Functionally, orphan G-protein coupled receptor involved in the regulation of hair cell orientation in mechanosensory organs of the inner ear. It is required to trigger a 180 degree reversal in hair cell orientation, creating a virtual line of polarity reversal (LPR) across which stereociliary bundles are arranged in opposite orientations. In Mus musculus (Mouse), this protein is Probable G-protein coupled receptor 156 (Gpr156).